The following is a 528-amino-acid chain: Nucleolar GTP-binding protein 1 (528 aa).

In terms of domain architecture, OBG-type G spans 168–335 (RTLLVCGFPN…VKAMACDLLL (168 aa)). GTP contacts are provided by residues 174–181 (GFPNVGKS), 220–224 (DTPGI), and 287–290 (SKSD). Residues 470–528 (PDSWKHRSRNSGGDIAVHVRRDSKTQVAQPPRLPSKKKARFDDKHYYDRKPKHLYRGRK) form a disordered region. A compositionally biased stretch (basic and acidic residues) spans 509 to 518 (RFDDKHYYDR). Basic residues predominate over residues 519–528 (KPKHLYRGRK).

Belongs to the TRAFAC class OBG-HflX-like GTPase superfamily. OBG GTPase family. NOG subfamily.

It localises to the nucleus. The protein localises to the nucleolus. Functionally, involved in the biogenesis of the 60S ribosomal subunit. The chain is Nucleolar GTP-binding protein 1 (NOG1) from Encephalitozoon cuniculi (strain GB-M1) (Microsporidian parasite).